The following is a 394-amino-acid chain: MAAETFLFTSESVNEGHPDKLCDQVSDAVLDACLAQDADSKVACETCTKTNMVMVFGEITTKATVDYEKIVRDTCRNIGFISDDVGLDADRCKVLVNIEQQSPDIAQGVHGHFTKRPEDIGAGDQGIMFGYATDETPELMPLSHVLATKLGARLTEVRKNGTCAWLRPDGKTQVTVEYLNEGGAMVPVRVHTVLISTQHDETVTNDEIAADLKEHVIKPVIPEKYLDEKTIFHLNPSGRFVIGGPHGDAGLTGRKIIIDTYGGWGAHGGGAFSGKDPTKVDRSGAYIARQAAKSIIASGLARRCIVQISYAIGVPEPLSVFVDSYGTGKIPDKEILKIVKENFDFRPGMISINLDLKKGGNRFIKTAAYGHFGREDADFTWEVVKPLKFDKASA.

Glu-11 contributes to the Mg(2+) binding site. His-17 contacts ATP. Position 45 (Glu-45) interacts with K(+). Residues Glu-58 and Gln-101 each contribute to the L-methionine site. Residues 169 to 171 (DGK), 237 to 240 (SGRF), Asp-248, 254 to 255 (RK), Ala-271, Lys-275, and Lys-279 contribute to the ATP site. Residue Asp-248 coordinates L-methionine. Lys-279 is an L-methionine binding site.

It belongs to the AdoMet synthase family. In terms of assembly, homotetramer. The cofactor is Mn(2+). Mg(2+) serves as cofactor. It depends on Co(2+) as a cofactor. K(+) is required as a cofactor.

The protein localises to the cytoplasm. The enzyme catalyses L-methionine + ATP + H2O = S-adenosyl-L-methionine + phosphate + diphosphate. Its pathway is amino-acid biosynthesis; S-adenosyl-L-methionine biosynthesis; S-adenosyl-L-methionine from L-methionine: step 1/1. Catalyzes the formation of S-adenosylmethionine from methionine and ATP. The reaction comprises two steps that are both catalyzed by the same enzyme: formation of S-adenosylmethionine (AdoMet) and triphosphate, and subsequent hydrolysis of the triphosphate. The protein is S-adenosylmethionine synthase 1 (SAMS1) of Triticum monococcum (Einkorn wheat).